We begin with the raw amino-acid sequence, 220 residues long: Fructose-6-phosphate aldolase (220 aa).

Lysine 85 serves as the catalytic Schiff-base intermediate with substrate.

The protein belongs to the transaldolase family. Type 3A subfamily. In terms of assembly, homodecamer.

The protein localises to the cytoplasm. It carries out the reaction beta-D-fructose 6-phosphate = dihydroxyacetone + D-glyceraldehyde 3-phosphate. Functionally, catalyzes the reversible formation of fructose 6-phosphate from dihydroxyacetone and D-glyceraldehyde 3-phosphate via an aldolization reaction. The protein is Fructose-6-phosphate aldolase of Salmonella schwarzengrund (strain CVM19633).